The chain runs to 113 residues: Ribonuclease P protein component (113 aa).

It belongs to the RnpA family. In terms of assembly, consists of a catalytic RNA component (M1 or rnpB) and a protein subunit.

It catalyses the reaction Endonucleolytic cleavage of RNA, removing 5'-extranucleotides from tRNA precursor.. Functionally, RNaseP catalyzes the removal of the 5'-leader sequence from pre-tRNA to produce the mature 5'-terminus. It can also cleave other RNA substrates such as 4.5S RNA. The protein component plays an auxiliary but essential role in vivo by binding to the 5'-leader sequence and broadening the substrate specificity of the ribozyme. This Clavibacter michiganensis subsp. michiganensis (strain NCPPB 382) protein is Ribonuclease P protein component.